The primary structure comprises 174 residues: MATTFLRNLFSQAQPSLLRRPLMPSSSSILPAAARLFSSTPAQNATLNQVMRGCRKPQRARHAVSPALSSIKSPALKGVCVKVGITRPKKPNSGERKTARVRLSTGKVITAYIPGEGHNISQHSVVLVRGGRAQDCPGVRYHLVRGALDLAGVATRMSSRSKYGTKKPKKASVG.

This sequence belongs to the universal ribosomal protein uS12 family. In terms of assembly, component of the mitochondrial small ribosomal subunit (mt-SSU). Mature N.crassa 74S mitochondrial ribosomes consist of a small (37S) and a large (54S) subunit. The 37S small subunit contains a 16S ribosomal RNA (16S mt-rRNA) and 32 different proteins. The 54S large subunit contains a 23S rRNA (23S mt-rRNA) and 42 different proteins. uS12m forms part of the decoding center of the mt-SSU.

It localises to the mitochondrion. Component of the mitochondrial ribosome (mitoribosome), a dedicated translation machinery responsible for the synthesis of mitochondrial genome-encoded proteins, including at least some of the essential transmembrane subunits of the mitochondrial respiratory chain. The mitoribosomes are attached to the mitochondrial inner membrane and translation products are cotranslationally integrated into the membrane. The chain is Small ribosomal subunit protein uS12m (mrps12) from Neurospora crassa (strain ATCC 24698 / 74-OR23-1A / CBS 708.71 / DSM 1257 / FGSC 987).